Reading from the N-terminus, the 248-residue chain is MSARQHTPDLRADGFTFKRFFIAHDRCAMKVGTDGILLGAWAPLRHESRILDVGCGSALISLMLAQRCEGRVPVDAVELDIAASVQAAENVAASPWRDTVVVHQADIVEFSCTTPHRYSLVVSNPPYFAAGVACASPQRTQARYTSSLSHEALLHSVSAVLMPEGRFCVVLPSQIVGDFLFLAESLQWHLALRVDVADNPRRPVHRVLLALTQAPIDPVYSSALLIRDELQQYSPDYRALTQDFYLSM.

It belongs to the methyltransferase superfamily. tRNA (adenine-N(6)-)-methyltransferase family.

The protein resides in the cytoplasm. It carries out the reaction adenosine(37) in tRNA1(Val) + S-adenosyl-L-methionine = N(6)-methyladenosine(37) in tRNA1(Val) + S-adenosyl-L-homocysteine + H(+). Specifically methylates the adenine in position 37 of tRNA(1)(Val) (anticodon cmo5UAC). The chain is tRNA1(Val) (adenine(37)-N6)-methyltransferase from Musicola paradisiaca (strain Ech703) (Dickeya paradisiaca).